A 301-amino-acid polypeptide reads, in one-letter code: 4-diphosphocytidyl-2-C-methyl-D-erythritol kinase (301 aa).

The active site involves lysine 18. Proline 103–alanine 113 is a binding site for ATP. Aspartate 145 is an active-site residue.

This sequence belongs to the GHMP kinase family. IspE subfamily.

It catalyses the reaction 4-CDP-2-C-methyl-D-erythritol + ATP = 4-CDP-2-C-methyl-D-erythritol 2-phosphate + ADP + H(+). Its pathway is isoprenoid biosynthesis; isopentenyl diphosphate biosynthesis via DXP pathway; isopentenyl diphosphate from 1-deoxy-D-xylulose 5-phosphate: step 3/6. Catalyzes the phosphorylation of the position 2 hydroxy group of 4-diphosphocytidyl-2C-methyl-D-erythritol. The protein is 4-diphosphocytidyl-2-C-methyl-D-erythritol kinase of Bradyrhizobium sp. (strain BTAi1 / ATCC BAA-1182).